The following is a 195-amino-acid chain: FK506-binding protein 2 (195 aa).

The first 19 residues, 1 to 19 (MKAALFLSALASTAVGVVA), serve as a signal peptide directing secretion. The 89-residue stretch at 39-127 (GDGVHMHYRG…VFETELVGID (89 aa)) folds into the PPIase FKBP-type domain. A Prevents secretion from ER motif is present at residues 192–195 (HEEL).

It belongs to the FKBP-type PPIase family. FKBP2 subfamily.

Its subcellular location is the endoplasmic reticulum. The enzyme catalyses [protein]-peptidylproline (omega=180) = [protein]-peptidylproline (omega=0). Inhibited by both FK506 and rapamycin. Its function is as follows. PPIases accelerate the folding of proteins. It catalyzes the cis-trans isomerization of proline imidic peptide bonds in oligopeptides. The polypeptide is FK506-binding protein 2 (FPR2) (Gibberella zeae (strain ATCC MYA-4620 / CBS 123657 / FGSC 9075 / NRRL 31084 / PH-1) (Wheat head blight fungus)).